The sequence spans 226 residues: Cytidylate kinase (226 aa).

Position 12 to 20 (12 to 20 (GPSGAGKGT)) interacts with ATP.

The protein belongs to the cytidylate kinase family. Type 1 subfamily.

The protein localises to the cytoplasm. The enzyme catalyses CMP + ATP = CDP + ADP. It catalyses the reaction dCMP + ATP = dCDP + ADP. The chain is Cytidylate kinase from Vibrio vulnificus (strain CMCP6).